The following is a 163-amino-acid chain: Probable chemoreceptor glutamine deamidase CheD (163 aa).

Belongs to the CheD family.

The enzyme catalyses L-glutaminyl-[protein] + H2O = L-glutamyl-[protein] + NH4(+). Probably deamidates glutamine residues to glutamate on methyl-accepting chemotaxis receptors (MCPs), playing an important role in chemotaxis. This is Probable chemoreceptor glutamine deamidase CheD from Pyrococcus abyssi (strain GE5 / Orsay).